The primary structure comprises 261 residues: Thiazole synthase (261 aa).

The active-site Schiff-base intermediate with DXP is lysine 98. Residues glycine 159, 185–186 (AG), and 207–208 (AS) each bind 1-deoxy-D-xylulose 5-phosphate.

The protein belongs to the ThiG family. Homotetramer. Forms heterodimers with either ThiH or ThiS.

The protein resides in the cytoplasm. It carries out the reaction [ThiS sulfur-carrier protein]-C-terminal-Gly-aminoethanethioate + 2-iminoacetate + 1-deoxy-D-xylulose 5-phosphate = [ThiS sulfur-carrier protein]-C-terminal Gly-Gly + 2-[(2R,5Z)-2-carboxy-4-methylthiazol-5(2H)-ylidene]ethyl phosphate + 2 H2O + H(+). It participates in cofactor biosynthesis; thiamine diphosphate biosynthesis. Its function is as follows. Catalyzes the rearrangement of 1-deoxy-D-xylulose 5-phosphate (DXP) to produce the thiazole phosphate moiety of thiamine. Sulfur is provided by the thiocarboxylate moiety of the carrier protein ThiS. In vitro, sulfur can be provided by H(2)S. The chain is Thiazole synthase from Mycobacterium leprae (strain Br4923).